A 176-amino-acid polypeptide reads, in one-letter code: Vitamin K epoxide reductase complex subunit 1-like protein 1 (176 aa).

Topologically, residues Met1–Arg13 are cytoplasmic. A helical membrane pass occupies residues Trp14–Val36. Residues Glu37–Asn87 lie on the Lumenal side of the membrane. The cysteines at positions 50 and 58 are disulfide-linked. Residue Asn87 coordinates (S)-warfarin. A helical membrane pass occupies residues Ser88 to Gly102. Over Met103–Ala107 the chain is Cytoplasmic. A helical membrane pass occupies residues Val108–Leu135. The Lumenal portion of the chain corresponds to Lys136–Phe138. Residues Cys139 and Cys142 are joined by a disulfide bond. A helical transmembrane segment spans residues Cys139–Leu160. Residues Cys142 and Tyr146 each contribute to the phylloquinone site. Position 146 (Tyr146) interacts with (S)-warfarin. Residues Val161–Asp176 are Cytoplasmic-facing.

Belongs to the VKOR family. As to expression, detected in testis and lung.

It is found in the endoplasmic reticulum membrane. It catalyses the reaction phylloquinone + [protein]-disulfide + H2O = 2,3-epoxyphylloquinone + [protein]-dithiol. The enzyme catalyses phylloquinol + [protein]-disulfide = phylloquinone + [protein]-dithiol. With respect to regulation, inhibited by warfarin (coumadin). Warfarin locks VKORC1 in both redox states into the closed conformation. In terms of biological role, involved in vitamin K metabolism. Can reduce inactive vitamin K 2,3-epoxide to active vitamin K, and may contribute to vitamin K-mediated protection against oxidative stress. Plays a role in vitamin K-dependent gamma-carboxylation of Glu residues in target proteins. This Mus musculus (Mouse) protein is Vitamin K epoxide reductase complex subunit 1-like protein 1 (Vkorc1l1).